The primary structure comprises 274 residues: Sulfur carrier protein FdhD (274 aa).

Cys-120 (cysteine persulfide intermediate) is an active-site residue.

It belongs to the FdhD family.

The protein localises to the cytoplasm. In terms of biological role, required for formate dehydrogenase (FDH) activity. Acts as a sulfur carrier protein that transfers sulfur from IscS to the molybdenum cofactor prior to its insertion into FDH. This is Sulfur carrier protein FdhD from Burkholderia mallei (strain ATCC 23344).